The primary structure comprises 222 residues: Cytidylate kinase (222 aa).

Position 10–18 (10–18 (GPSASGKGT)) interacts with ATP.

Belongs to the cytidylate kinase family. Type 1 subfamily.

The protein resides in the cytoplasm. It catalyses the reaction CMP + ATP = CDP + ADP. It carries out the reaction dCMP + ATP = dCDP + ADP. The polypeptide is Cytidylate kinase (Chromobacterium violaceum (strain ATCC 12472 / DSM 30191 / JCM 1249 / CCUG 213 / NBRC 12614 / NCIMB 9131 / NCTC 9757 / MK)).